Reading from the N-terminus, the 855-residue chain is Potassium transporter 13 (855 aa).

Positions 1 to 67 are disordered; that stretch reads MFHVEEESSG…EMDSDEEDDN (67 aa). At 1 to 105 the chain is on the cytoplasmic side; it reads MFHVEEESSG…EIEDTGIGKK (105 aa). Acidic residues predominate over residues 36–51; the sequence is EKDDYEVNEDYDDDGY. The chain crosses the membrane as a helical span at residues 106–126; that stretch reads LILALQTLGVVFGDIGTSPLY. Topologically, residues 127-142 are extracellular; sequence TFTVMFRRSPINDKED. The chain crosses the membrane as a helical span at residues 143 to 163; the sequence is IIGALSLVIYTLILIPLVKYV. Over 164–233 the chain is Cytoplasmic; that stretch reads HFVLWANDDG…RLEASMALKK (70 aa). The helical transmembrane segment at 234–254 threads the bilayer; the sequence is LLLILVLAGTAMVIADAVVTP. The Extracellular portion of the chain corresponds to 255-268; that stretch reads AMSVMSAIGGLKVG. The helical transmembrane segment at 269 to 289 threads the bilayer; the sequence is VGVIEQDQVVVISVSFLVILF. Over 290–298 the chain is Cytoplasmic; that stretch reads SVQKYGTSK. Residues 299 to 319 traverse the membrane as a helical segment; it reads LGLVLGPALLLWFFCLAGIGI. At 320–346 the chain is on the extracellular side; the sequence is YNLVKYDSSVFKAFNPAYIYFFFKRNS. A helical membrane pass occupies residues 347 to 367; sequence VNAWYALGGCVLCATGSEAMF. The Cytoplasmic portion of the chain corresponds to 368–379; the sequence is ADLSYFSVHSIQ. The chain crosses the membrane as a helical span at residues 380-400; that stretch reads LTFILLVLPCLLLGYLGQAAY. Residues 401-415 are Extracellular-facing; it reads LSENFSAAGDAFFSS. N-linked (GlcNAc...) asparagine glycosylation occurs at Asn404. A helical transmembrane segment spans residues 416-436; the sequence is VPSSLFWPVFLISNVAALIAS. Residues 437–467 are Cytoplasmic-facing; sequence RAMTTATFTCIKQSIALGCFPRLKIIHTSKK. Residues 468 to 488 traverse the membrane as a helical segment; sequence FIGQIYIPVLNWSLLVVCLIV. At 489–503 the chain is on the extracellular side; it reads VCSTSNIFAIGNAYG. A helical transmembrane segment spans residues 504–524; sequence IAELGIMMTTTILVTLIMLLI. Residues 525-528 are Cytoplasmic-facing; the sequence is WQTN. A helical transmembrane segment spans residues 529–549; that stretch reads IIVVSMFAIVSLIVELVFFSS. Over 550–553 the chain is Extracellular; sequence VCSS. Residues 554–574 traverse the membrane as a helical segment; the sequence is VADGSWIILVFATIMFLIMFV. At 575 to 855 the chain is on the cytoplasmic side; the sequence is WNYGSKLKYE…LMQVGMTYMV (281 aa). Position 766 is a phosphoserine (Ser766).

This sequence belongs to the HAK/KUP transporter (TC 2.A.72.3) family.

It is found in the cell membrane. Probable potassium transporter. The sequence is that of Potassium transporter 13 (POT13) from Arabidopsis thaliana (Mouse-ear cress).